A 349-amino-acid polypeptide reads, in one-letter code: Protein RecA (349 aa).

An ATP-binding site is contributed by 65-72; sequence GPESSGKT.

This sequence belongs to the RecA family.

The protein resides in the cytoplasm. Can catalyze the hydrolysis of ATP in the presence of single-stranded DNA, the ATP-dependent uptake of single-stranded DNA by duplex DNA, and the ATP-dependent hybridization of homologous single-stranded DNAs. It interacts with LexA causing its activation and leading to its autocatalytic cleavage. The sequence is that of Protein RecA from Enterococcus faecium (Streptococcus faecium).